The sequence spans 459 residues: UDP-N-acetylglucosamine 1-carboxyvinyltransferase (459 aa).

Residue Lys-40–Asn-41 coordinates phosphoenolpyruvate. UDP-N-acetyl-alpha-D-glucosamine is bound at residue Arg-111. Residue Cys-135 is the Proton donor of the active site. Cys-135 is subject to 2-(S-cysteinyl)pyruvic acid O-phosphothioketal. Residues Arg-140 to Leu-144, Asp-324, and Val-346 each bind UDP-N-acetyl-alpha-D-glucosamine. The interval Pro-437–Val-459 is disordered. The span at Pro-441–Val-459 shows a compositional bias: low complexity.

It belongs to the EPSP synthase family. MurA subfamily.

The protein resides in the cytoplasm. The catalysed reaction is phosphoenolpyruvate + UDP-N-acetyl-alpha-D-glucosamine = UDP-N-acetyl-3-O-(1-carboxyvinyl)-alpha-D-glucosamine + phosphate. It functions in the pathway cell wall biogenesis; peptidoglycan biosynthesis. Its function is as follows. Cell wall formation. Adds enolpyruvyl to UDP-N-acetylglucosamine. This Gloeobacter violaceus (strain ATCC 29082 / PCC 7421) protein is UDP-N-acetylglucosamine 1-carboxyvinyltransferase.